We begin with the raw amino-acid sequence, 268 residues long: Diaminopimelate epimerase (268 aa).

Substrate contacts are provided by N13, Q46, and N64. The active-site Proton donor is the C73. Substrate is bound by residues 74–75 (GN), N148, N181, and 199–200 (ER). Residue C208 is the Proton acceptor of the active site. 209 to 210 (GT) contributes to the substrate binding site.

This sequence belongs to the diaminopimelate epimerase family. Homodimer.

It localises to the cytoplasm. The catalysed reaction is (2S,6S)-2,6-diaminopimelate = meso-2,6-diaminopimelate. It participates in amino-acid biosynthesis; L-lysine biosynthesis via DAP pathway; DL-2,6-diaminopimelate from LL-2,6-diaminopimelate: step 1/1. In terms of biological role, catalyzes the stereoinversion of LL-2,6-diaminopimelate (L,L-DAP) to meso-diaminopimelate (meso-DAP), a precursor of L-lysine and an essential component of the bacterial peptidoglycan. The protein is Diaminopimelate epimerase of Sphingopyxis alaskensis (strain DSM 13593 / LMG 18877 / RB2256) (Sphingomonas alaskensis).